The chain runs to 510 residues: AAA-ATPase At3g28540 (510 aa).

The helical transmembrane segment at L7–Y25 threads the bilayer. G246 to S253 contacts ATP. The interval K460–I510 is disordered.

It belongs to the AAA ATPase family. BCS1 subfamily. It depends on Mg(2+) as a cofactor.

It localises to the membrane. It catalyses the reaction ATP + H2O = ADP + phosphate + H(+). This chain is AAA-ATPase At3g28540, found in Arabidopsis thaliana (Mouse-ear cress).